Here is a 761-residue protein sequence, read N- to C-terminus: Disintegrin and metalloproteinase domain-containing protein 24 (761 aa).

The N-terminal stretch at Met-1–Cys-34 is a signal peptide. Residues Ala-35–Tyr-200 constitute a propeptide that is removed on maturation. The Extracellular segment spans residues Ala-35–Asn-697. The N-linked (GlcNAc...) asparagine glycan is linked to Asn-140. A Cysteine switch motif is present at residues Met-172–Glu-179. Cys-174 is a Zn(2+) binding site. A Peptidase M12B domain is found at Leu-208–Pro-400. Asn-227 and Asn-301 each carry an N-linked (GlcNAc...) asparagine glycan. 7 cysteine pairs are disulfide-bonded: Cys-323-Cys-393, Cys-357-Cys-379, Cys-359-Cys-364, Cys-465-Cys-485, Cys-635-Cys-646, Cys-640-Cys-652, and Cys-654-Cys-663. Residue His-342 participates in Zn(2+) binding. The active site involves Glu-343. His-346 and His-352 together coordinate Zn(2+). Asn-378, Asn-390, and Asn-479 each carry an N-linked (GlcNAc...) asparagine glycan. One can recognise a Disintegrin domain in the interval Leu-406–Asp-493. The EGF-like domain occupies Trp-631–Gln-664. Residues Val-698–Leu-718 form a helical membrane-spanning segment. The Cytoplasmic segment spans residues Ser-719–Pro-761. A disordered region spans residues Ser-725–Pro-761.

In terms of assembly, monomer. Requires Zn(2+) as cofactor. In terms of processing, the prodomain is removed during sperm passage through the caput epididymis after the protein has reached the cell surface. Not processed in the secretory pathway. As to expression, expressed exclusively in testis and more specifically on the surface of mature sperm (at protein level).

It is found in the membrane. Plasma membrane protease present on mature sperm that may be involved in sperm function during epididymal maturation and/or fertilization. This is Disintegrin and metalloproteinase domain-containing protein 24 from Mus musculus (Mouse).